The primary structure comprises 196 residues: Guanylate kinase (196 aa).

Residues 8–191 (GRLIVLTGPT…AAADLWSVIA (184 aa)) enclose the Guanylate kinase-like domain. Position 15 to 22 (15 to 22 (GPTAVGKG)) interacts with ATP.

It belongs to the guanylate kinase family.

The protein localises to the cytoplasm. It carries out the reaction GMP + ATP = GDP + ADP. Its function is as follows. Essential for recycling GMP and indirectly, cGMP. The protein is Guanylate kinase of Bifidobacterium longum (strain NCC 2705).